The sequence spans 990 residues: Serine/threonine-protein phosphatase 6 regulatory ankyrin repeat subunit B (990 aa).

ANK repeat units lie at residues 7-36 (ADQPPLVQAIFSGDPEEIRMLIYKTEDVNA), 40-69 (EKRTPLHVASFLGDADIIELLILSGARVNA), 73-102 (MWLTPLHRAVASRSEEAVQVLIKHSADVNA), 106-135 (NWQTPLHVAAANKALKCAEIIIPMLSSVNV), 139-168 (GGRTALHHAALNGHVEMVNLLLAKGANINA), 172-201 (KDRRALHWAAYMGHLEVVALLINHGAEVTC), 205-234 (KGYTPLHAAASNGQINIVKHLLNLGVEIDE), 238-267 (YGNTALHIACYNGQDSVVNELIDYGANVNQ), 271-301 (NGFTPLHFAAASTHGALCLELLVNNGADVNI), 305-334 (DGKSPLHMTAVHGRFTRSQTLIQNGGEIDC), 338-367 (DGNTPLHVAARYGHELLINTLITSGADTAK), 371-400 (HNMFPLHLAALNAHSDCCRKLLSSGFEIDT), 404-433 (FGRTCLHAAAAGGNVECIKLLQSSGADFNK), 437-466 (RGRTPLHYAAANCHFHCIETLVTTGANINE), 470-499 (WGRTPLHYAAASDMDRKKNILGNSHENAEE), 531-560 (EGYNTVHYAAAYGHRQCLELLLEKNSNMFE), 566-595 (ATKSPLHLAAYNGHHQALEVLLQSLVDLDI), 599-628 (KGRTALDLAAFKGHAECVEALISQGASVTV), 633-662 (TKRTPLHASVINGHTPCLRLLLEVADNPDV), 666-695 (KGQTPLMLAVAYGHIDAVSLLLEKEASVDA), 699-728 (LGCTALHRGIMTGHEECVQMLLEKEVSILC), 732-761 (RGRTPLHFAAARGHATWLSELLQIALSEED), 768-797 (QGYTPLHWACYNGHENCIEVLLEQKFFRKF), 800-829 (NSFSPLHCAVINDHENCASMLIGAIDASIV), 835-864 (KGRTPLHAAAFADHVECLQLLLSHSAQVNA), 868-898 (AGKTALMMAAQNGHVGAVDFLVNIAKADLTL), 902-931 (DSNTSLHLASSKGHEKCALLILDKIQEQSL), and 938-967 (SLQTPLHIAARNGLKMVVEELLAKGACVLA).

Protein phosphatase 6 (PP6) holoenzyme is proposed to be a heterotrimeric complex formed by the catalytic subunit, a SAPS domain-containing subunit (PP6R) and an ankyrin repeat-domain containing regulatory subunit (ARS).

Its function is as follows. Putative regulatory subunit of protein phosphatase 6 (PP6) that may be involved in the recognition of phosphoprotein substrates. This chain is Serine/threonine-protein phosphatase 6 regulatory ankyrin repeat subunit B (ANKRD44), found in Gallus gallus (Chicken).